A 339-amino-acid polypeptide reads, in one-letter code: Dihydroorotate dehydrogenase (quinone) (339 aa).

FMN is bound by residues 62–66 (AGMDK) and threonine 86. A substrate-binding site is contributed by lysine 66. 111-115 (NRMGF) lines the substrate pocket. Asparagine 139 and asparagine 172 together coordinate FMN. Asparagine 172 contributes to the substrate binding site. Serine 175 (nucleophile) is an active-site residue. A substrate-binding site is contributed by asparagine 177. Residues lysine 217 and threonine 245 each coordinate FMN. 246-247 (NT) contacts substrate. FMN contacts are provided by residues glycine 268, glycine 297, and 318-319 (YS).

The protein belongs to the dihydroorotate dehydrogenase family. Type 2 subfamily. Monomer. Requires FMN as cofactor.

The protein resides in the cell membrane. It carries out the reaction (S)-dihydroorotate + a quinone = orotate + a quinol. It participates in pyrimidine metabolism; UMP biosynthesis via de novo pathway; orotate from (S)-dihydroorotate (quinone route): step 1/1. Catalyzes the conversion of dihydroorotate to orotate with quinone as electron acceptor. The chain is Dihydroorotate dehydrogenase (quinone) from Shewanella piezotolerans (strain WP3 / JCM 13877).